Consider the following 309-residue polypeptide: Probable ABC transporter permease protein y4oQ (309 aa).

The next 7 membrane-spanning stretches (helical) occupy residues 25 to 45, 89 to 109, 123 to 143, 174 to 194, 221 to 241, 246 to 266, and 278 to 298; these read VVWF…VPLV, LIYA…FAVL, LMLI…KLLY, VIIV…LAGL, LPHL…GVMA, IFLL…VYAY, and TTAI…PLIW. An ABC transmembrane type-1 domain is found at 85–296; sequence IRVTLIYAVV…VFVLAISAPL (212 aa).

This sequence belongs to the binding-protein-dependent transport system permease family. MalFG subfamily.

It localises to the cell inner membrane. In terms of biological role, probably part of the binding-protein-dependent transport system y4oPQRS. This system probably transports a sugar-like molecule. Probably responsible for the translocation of the substrate across the membrane. The polypeptide is Probable ABC transporter permease protein y4oQ (Sinorhizobium fredii (strain NBRC 101917 / NGR234)).